Here is a 310-residue protein sequence, read N- to C-terminus: Quinolinate synthase (310 aa).

Positions 27 and 44 each coordinate iminosuccinate. C89 is a [4Fe-4S] cluster binding site. Residues 115–117 (YVN) and S132 each bind iminosuccinate. C175 lines the [4Fe-4S] cluster pocket. Iminosuccinate is bound by residues 201-203 (HPE) and T222. [4Fe-4S] cluster is bound at residue C267.

This sequence belongs to the quinolinate synthase family. Type 2 subfamily. Requires [4Fe-4S] cluster as cofactor.

The protein resides in the cytoplasm. It carries out the reaction iminosuccinate + dihydroxyacetone phosphate = quinolinate + phosphate + 2 H2O + H(+). It participates in cofactor biosynthesis; NAD(+) biosynthesis; quinolinate from iminoaspartate: step 1/1. Functionally, catalyzes the condensation of iminoaspartate with dihydroxyacetone phosphate to form quinolinate. This is Quinolinate synthase from Thermus thermophilus (strain ATCC 27634 / DSM 579 / HB8).